The chain runs to 492 residues: GPI alpha-1,6-mannosyltransferase 2 (492 aa).

Over 1–13 (MGLLDPSQKEVLK) the chain is Cytoplasmic. The chain crosses the membrane as a helical span at residues 14–34 (FAVSCRILTLVLQALFNIIIP). At 35–77 (DHHADAFSPPRLAPSGSVDQLVEALLGGLSRWDAEHFLFIAEH) the chain is on the lumenal side. A helical membrane pass occupies residues 78 to 98 (GYLYEHNFAFFPGFPLALLMG). At 99-113 (TELLRPLQGLLSERS) the chain is on the cytoplasmic side. Residues 114–134 (CLLVSVALLNSLFSVLAAVAL) traverse the membrane as a helical segment. At 135–136 (HD) the chain is on the lumenal side. The helical transmembrane segment at 137–157 (LGCLVLHCPRQAFCAALLFCL) threads the bilayer. The Cytoplasmic segment spans residues 158–161 (SPAN). Residues 162-182 (VFLAAGYSEALFAFLTFSAMG) form a helical membrane-spanning segment. Topologically, residues 183 to 192 (QLERGRGWAS) are lumenal. The chain crosses the membrane as a helical span at residues 193-213 (GLLFALAAGVRSNGLVSVGFL). Topologically, residues 214-234 (LHSQCRGFCSSLVVLDPLKGL) are cytoplasmic. The chain crosses the membrane as a helical span at residues 235–255 (VKLMASLCLSVLTVSLPFALF). Residues 256–327 (QYYAYTQFCF…RYYELRQVPN (72 aa)) are Lumenal-facing. A helical membrane pass occupies residues 328 to 348 (FLLATPVTVLVVWATWTYVTA). Residues 349 to 378 (HPWLCLTLGLQRTKDRESLEKPHPGFLSAK) are Cytoplasmic-facing. The helical transmembrane segment at 379–399 (VFVYLVHAAALLAFGGLCMHV) threads the bilayer. The Lumenal segment spans residues 400 to 468 (QVLTRLLGSS…NWKTCSPVTK (69 aa)). Residues 469–489 (CILVYFLTYWLLGLIMHCNFL) traverse the membrane as a helical segment. Topologically, residues 490-492 (PWT) are cytoplasmic.

This sequence belongs to the PIGV family. Not N-glycosylated.

The protein resides in the endoplasmic reticulum membrane. Its pathway is glycolipid biosynthesis; glycosylphosphatidylinositol-anchor biosynthesis. Functionally, alpha-1,6-mannosyltransferase that catalyzes the transfer of the second mannose, via an alpha-1,6 bond, from a dolichol-phosphate-mannose (Dol-P-Man) to the alpha-D-Man-(1-&gt;4)-alpha-D-GlcN-(1-&gt;6)-(1-radyl,2-acyl-sn-glycero-3-phospho)-2-acyl-inositol (also termed H2) intermediate to generate an alpha-D-Man-(1-&gt;6)-alpha-D-Man-(1-&gt;4)-alpha-D-GlcN-(1-&gt;6)-(1-radyl,2-acyl-sn-glycero-3-phospho)-2-acyl-inositol (also termed H3) and participates in the seventh step of the glycosylphosphatidylinositol-anchor biosynthesis. Also transfers the second mannose on a 2-PEtn-alpha-D-Man-(1-&gt;4)-alpha-D-GlcN-(1-&gt;6)-(1-radyl,2-acyl-sn-glycero-3-phospho)-2-acyl-inositol (also termed H5). This is GPI alpha-1,6-mannosyltransferase 2 from Rattus norvegicus (Rat).